The sequence spans 246 residues: MFPVKVKVEKSEMEMAKARNQLDAVLQCLLEKSHMDRERLDEEAGKTPLDTHNKDCSIAATGKRPSARFPHQRRKKRREMDDGLAEGGPQRSNTYVIKLFDRSVDLAQFSENTPLYPICRAWMRNSPTVRERERSPGSPLPPLPEDGEGSEVINSKNRDVYKLPPPTAPGPLGDACRSRIPSPLQPETEGTPDDEPSEPEPSPSTLIYRNMQRWKRIRQRWKEASHRNQLRYSESMKILREMYDRQ.

Position 1 is an N-acetylmethionine (Met-1). Glycyl lysine isopeptide (Lys-Gly) (interchain with G-Cter in SUMO2) cross-links involve residues Lys-5 and Lys-7. Residues 39–55 show a composition bias toward basic and acidic residues; that stretch reads RLDEEAGKTPLDTHNKD. Disordered stretches follow at residues 39 to 90 and 129 to 208; these read RLDE…GGPQ and VRER…TLIY. 2 positions are modified to phosphoserine: Ser-135 and Ser-138. A Phosphothreonine modification is found at Thr-167. Phosphoserine is present on residues Ser-182 and Ser-202.

As to quaternary structure, component of the DREAM complex (also named LINC complex) at least composed of E2F4, E2F5, LIN9, LIN37, LIN52, LIN54, MYBL1, MYBL2, RBL1, RBL2, RBBP4, TFDP1 and TFDP2. The complex exists in quiescent cells where it represses cell cycle-dependent genes. It dissociates in S phase when LIN9, LIN37, LIN52 and LIN54 form a subcomplex that binds to MYBL2.

This chain is Protein lin-37 homolog (Lin37), found in Mus musculus (Mouse).